Consider the following 339-residue polypeptide: Polyhydroxybutyrate depolymerase (339 aa).

A signal peptide spans 1-20; that stretch reads MFDSVKIAWLVALGAAQVAA. Residue serine 39 is part of the active site. Cysteine 70 and cysteine 79 are joined by a disulfide. Aspartate 121 is an active-site residue. Asparagine 144 carries N-linked (GlcNAc...) asparagine glycosylation. Histidine 155 is a catalytic residue. Disulfide bonds link cysteine 169–cysteine 180, cysteine 234–cysteine 241, and cysteine 250–cysteine 304. Tryptophan 307 provides a ligand contact to (3R)-hydroxybutanoate trimer.

The protein belongs to the carbohydrate esterase 1 (CE1) family.

It localises to the secreted. It catalyses the reaction [(3R)-hydroxybutanoate](n) + H2O = [(3R)-hydroxybutanoate](n-1) + (R)-3-hydroxybutanoate + H(+). The enzyme is completely inhibited by dithiothreitol (DTT) and diisopropylfluorophosphate (DFP), and partially inhibited by HgCl(2) and by enzyme3-(p-nitrophenoxy)propane (EPNP). Activity is not affected by N-ethylmaleimide (NEM) or phenylmethylsulfonyl fluoride (PMSF). Esterase involved in the hydrolysis of polyhydroxybutyrate, a microbial polyester that can be produced from renewable resources. The sequence is that of Polyhydroxybutyrate depolymerase from Talaromyces funiculosus (Fruitlet core rot fungus).